We begin with the raw amino-acid sequence, 149 residues long: Transcriptional repressor NrdR (149 aa).

A zinc finger spans residues 3–34 (CPFCSATDTKVIDSRLVADGHQVRRRRECVQC). In terms of domain architecture, ATP-cone spans 49–139 (PRVVKQDGSR…VYRAFEDVSE (91 aa)).

This sequence belongs to the NrdR family. The cofactor is Zn(2+).

In terms of biological role, negatively regulates transcription of bacterial ribonucleotide reductase nrd genes and operons by binding to NrdR-boxes. The protein is Transcriptional repressor NrdR of Shewanella piezotolerans (strain WP3 / JCM 13877).